The chain runs to 1356 residues: Serine/threonine-protein kinase PSK1 (1356 aa).

Phosphoserine is present on S10. The disordered stretch occupies residues 20 to 115 (KHAITHKGTS…SVDSTVSSPL (96 aa)). Composition is skewed to polar residues over residues 26–37 (KGTSSSVASLQT) and 54–64 (YDTSLSDVSTP). Residues 99–115 (LPSTASSSVDSTVSSPL) are compositionally biased toward low complexity. 5 positions are modified to phosphoserine: S192, S202, S255, S286, and S327. The PAS 1 domain occupies 450-518 (RTFTSTKNSA…VLHKLLSTEG (69 aa)). Over residues 592 to 608 (PTLSSSSTLSLPKMASS) the composition is skewed to low complexity. Disordered regions lie at residues 592–612 (PTLS…PTGS) and 627–660 (YTKP…PVRS). The region spanning 738-807 (LKLKIHSLPY…FINDKYPALD (70 aa)) is the PAS 2 domain. At S926 the chain carries Phosphoserine. Positions 948–972 (DSRAHSQSTLSEQEQVPLENDKDSG) are disordered. The segment covering 952 to 961 (HSQSTLSEQE) has biased composition (polar residues). Phosphoserine occurs at positions 1018, 1023, 1035, and 1055. A compositionally biased stretch (polar residues) spans 1021-1032 (TESLADSKSSGK). The disordered stretch occupies residues 1021–1066 (TESLADSKSSGKGLSPLEEEKLIDENATENGLAGSPKDEDGIIMTN). T1079 is modified (phosphothreonine). The Protein kinase domain occupies 1096–1354 (FVSLQKMGEG…IDDINNDKWL (259 aa)). ATP contacts are provided by residues 1102-1110 (MGEGAYGKV) and K1125. D1230 functions as the Proton acceptor in the catalytic mechanism.

It belongs to the protein kinase superfamily. Ser/Thr protein kinase family.

Its subcellular location is the cytoplasm. It catalyses the reaction L-seryl-[protein] + ATP = O-phospho-L-seryl-[protein] + ADP + H(+). The catalysed reaction is L-threonyl-[protein] + ATP = O-phospho-L-threonyl-[protein] + ADP + H(+). Serine/threonine-protein kinase involved in the control of sugar metabolism and translation. Phosphorylates UGP1, which is required for normal glycogen and beta-(1,6)-glucan synthesis. This phosphorylation shifts glucose partitioning toward cell wall glucan synthesis at the expense of glycogen synthesis. This Saccharomyces cerevisiae (strain ATCC 204508 / S288c) (Baker's yeast) protein is Serine/threonine-protein kinase PSK1 (PSK1).